The primary structure comprises 235 residues: Large ribosomal subunit protein uL1 (235 aa).

This sequence belongs to the universal ribosomal protein uL1 family. As to quaternary structure, part of the 50S ribosomal subunit.

In terms of biological role, binds directly to 23S rRNA. The L1 stalk is quite mobile in the ribosome, and is involved in E site tRNA release. Functionally, protein L1 is also a translational repressor protein, it controls the translation of the L11 operon by binding to its mRNA. The protein is Large ribosomal subunit protein uL1 of Prochlorococcus marinus (strain NATL1A).